The chain runs to 76 residues: Large ribosomal subunit protein uL29 (76 aa).

Belongs to the universal ribosomal protein uL29 family.

The polypeptide is Large ribosomal subunit protein uL29 (Corynebacterium kroppenstedtii (strain DSM 44385 / JCM 11950 / CIP 105744 / CCUG 35717)).